The primary structure comprises 64 residues: Large ribosomal subunit protein bL35 (64 aa).

Positions 1-55 are disordered; sequence MPKMKSNKSVAARFKLTGSGQLKRTRPGKRHKLSKRSSQQKRNLSKQPLVDQGQV. Basic residues predominate over residues 23–39; the sequence is KRTRPGKRHKLSKRSSQ.

Belongs to the bacterial ribosomal protein bL35 family.

This is Large ribosomal subunit protein bL35 from Chlamydia muridarum (strain MoPn / Nigg).